We begin with the raw amino-acid sequence, 95 residues long: MKLQPLADRILVKRLAEETKTKGGIIIPDTAKEKPAEGEIVAVGPGRNAEDGTKIALEVKVGDRVLFGKYSGTEVKIEGEEYLIMREDDVLGIVQ.

It belongs to the GroES chaperonin family. Heptamer of 7 subunits arranged in a ring. Interacts with the chaperonin GroEL.

It is found in the cytoplasm. In terms of biological role, together with the chaperonin GroEL, plays an essential role in assisting protein folding. The GroEL-GroES system forms a nano-cage that allows encapsulation of the non-native substrate proteins and provides a physical environment optimized to promote and accelerate protein folding. GroES binds to the apical surface of the GroEL ring, thereby capping the opening of the GroEL channel. This is Co-chaperonin GroES from Desulfatibacillum aliphaticivorans.